The primary structure comprises 674 residues: 1,4-alpha-glucan branching enzyme GlgB 1 (674 aa).

Asp-336 acts as the Nucleophile in catalysis. Glu-389 serves as the catalytic Proton donor.

The protein belongs to the glycosyl hydrolase 13 family. GlgB subfamily. Monomer.

It catalyses the reaction Transfers a segment of a (1-&gt;4)-alpha-D-glucan chain to a primary hydroxy group in a similar glucan chain.. It participates in glycan biosynthesis; glycogen biosynthesis. Its function is as follows. Catalyzes the formation of the alpha-1,6-glucosidic linkages in glycogen by scission of a 1,4-alpha-linked oligosaccharide from growing alpha-1,4-glucan chains and the subsequent attachment of the oligosaccharide to the alpha-1,6 position. This is 1,4-alpha-glucan branching enzyme GlgB 1 (glgB1) from Clostridium perfringens (strain 13 / Type A).